The chain runs to 171 residues: Mitochondrial import inner membrane translocase subunit Tim17-A (171 aa).

A disulfide bond links cysteine 9 and cysteine 78. The next 3 membrane-spanning stretches (helical) occupy residues 17–37 (CGGAFTMGTIGGGIFQAFKGF), 63–77 (GGSFAVWGGLFSTID), and 113–133 (VGSAAMGGILLALIEGAGILL). The segment at 144–171 (GPQFTEDHSQLPSSQLPSSPFGDYRQYQ) is disordered. Residues 153–163 (QLPSSQLPSSP) are compositionally biased toward low complexity.

The protein belongs to the Tim17/Tim22/Tim23 family. Component of the TIM23 complex at least composed of TIMM23, TIMM17 (TIMM17A or TIMM17B) and TIMM50. The complex interacts with the TIMM44 component of the PAM complex and with DNAJC15. In terms of processing, degraded by YMEL1 downstream of the integrated stress response (ISR).

It localises to the mitochondrion inner membrane. Functionally, essential component of the TIM23 complex, a complex that mediates the translocation of transit peptide-containing proteins across the mitochondrial inner membrane. The protein is Mitochondrial import inner membrane translocase subunit Tim17-A (Timm17a) of Mus musculus (Mouse).